A 418-amino-acid chain; its full sequence is Sialidase-3 (418 aa).

An FRIP motif motif is present at residues 24-27 (YRIP). Residues Arg25 and Arg45 each coordinate substrate. Residue Asp50 is the Proton acceptor of the active site. A BNR 1 repeat occupies 129–140 (LCSEDAGCSWGE). The substrate site is built by Tyr179 and Tyr181. Residues 203–214 (SDDFGVTWHHGK) form a BNR 2 repeat. Substrate contacts are provided by Glu223 and Arg243. A BNR 3 repeat occupies 254 to 265 (STDSGGCFQKPT). The residue at position 312 (Ser312) is a Phosphoserine. Position 339 (Arg339) interacts with substrate. Tyr369 (nucleophile) is an active-site residue. Glu386 is a catalytic residue.

Belongs to the glycosyl hydrolase 33 family. As to quaternary structure, interacts with CAV1; this interaction enhances NEU3 sialidase activity within caveola. Interacts with EGFR; this interaction mediates desialylation of EGFR and enhances downstream signaling. Palmitoylated; may regulate intracellular trafficking and anchorage to plasma membrane and endomembranes. In terms of tissue distribution, expressed in heart, brain and cerebral cortex.

The protein localises to the cell membrane. It is found in the membrane. Its subcellular location is the caveola. The protein resides in the early endosome membrane. It localises to the recycling endosome membrane. The protein localises to the lysosome membrane. The enzyme catalyses Hydrolysis of alpha-(2-&gt;3)-, alpha-(2-&gt;6)-, alpha-(2-&gt;8)- glycosidic linkages of terminal sialic acid residues in oligosaccharides, glycoproteins, glycolipids, colominic acid and synthetic substrates.. It carries out the reaction a ganglioside GD1a + H2O = a ganglioside GM1 + N-acetylneuraminate. It catalyses the reaction a ganglioside GD1a (d18:1(4E)) + H2O = a ganglioside GM1 (d18:1(4E)) + N-acetylneuraminate. The catalysed reaction is a ganglioside GD1b + H2O = a ganglioside GM1 + N-acetylneuraminate. The enzyme catalyses a ganglioside GD1b (d18:1(4E)) + H2O = a ganglioside GM1 (d18:1(4E)) + N-acetylneuraminate. It carries out the reaction a ganglioside GD3 + H2O = a ganglioside GM3 + N-acetylneuraminate. It catalyses the reaction a ganglioside GD3 (d18:1(4E)) + H2O = a ganglioside GM3 (d18:1(4E)) + N-acetylneuraminate. The catalysed reaction is a ganglioside GM3 + H2O = a beta-D-galactosyl-(1-&gt;4)-beta-D-glucosyl-(1&lt;-&gt;1)-ceramide + N-acetylneuraminate. The enzyme catalyses a ganglioside GM1 + H2O = a ganglioside GA1 + N-acetylneuraminate. It carries out the reaction a ganglioside GM1 (d18:1(4E)) + H2O = a ganglioside GA1 (d18:1(4E)) + N-acetylneuraminate. It catalyses the reaction a ganglioside GM2 (d18:1(4E)) + H2O = a ganglioside GA2 (d18:1(4E)) + N-acetylneuraminate. The catalysed reaction is a ganglioside GM3 (d18:1(4E)) + H2O = a beta-D-Gal-(1-&gt;4)-beta-D-Glc-(1&lt;-&gt;1)-Cer(d18:1(4E)) + N-acetylneuraminate. The enzyme catalyses a ganglioside GT1b + H2O = a ganglioside GD1b + N-acetylneuraminate. In terms of biological role, exo-alpha-sialidase that catalyzes the hydrolytic cleavage of the terminal sialic acid (N-acetylneuraminic acid, Neu5Ac) of a glycan moiety in the catabolism of glycolipids, glycoproteins and oligosacharides. Displays high catalytic efficiency for gangliosides including alpha-(2-&gt;3)-sialylated GD1a and GM3 and alpha-(2-&gt;8)-sialylated GD3. Plays a role in the regulation of transmembrane signaling through the modulation of ganglioside content of the lipid bilayer and by direct interaction with signaling receptors, such as EGFR. Desialylates EGFR and activates downstream signaling in proliferating cells. Contributes to clathrin-mediated endocytosis by regulating sorting of endocytosed receptors to early and recycling endosomes. This Mus musculus (Mouse) protein is Sialidase-3 (Neu3).